We begin with the raw amino-acid sequence, 219 residues long: Albonoursin synthase (219 aa).

Belongs to the nitroreductase family. As to quaternary structure, homomer. FMN is required as a cofactor. The N-terminus is blocked.

The protein resides in the cytoplasm. It carries out the reaction cyclo(L-phenylalanyl-L-leucyl) + 2 O2 = albonoursin + 2 H2O2. In terms of biological role, involved in the biosynthesis of albonoursin (cyclo[(alpha,beta-dehydro-Phe)-(alpha,beta-dehydro-Leu)]), an antibacterial peptide. Catalyzes the formation of alpha,beta-dehydro-Phe (DPhe) and alpha,beta-dehydro-Leu (DLeu) residues during the biosynthesis of albonoursin. The catalytic reaction of cyclo(L-Phe-L-Leu) occurs in a two-step sequential alpha-beta-dehydrogenation leading first to cyclo(alpha,beta-dehydro-Phe-L-Leu) and finally to albonoursin. Can also use cyclo(L-Phe-L-His), cyclo(L-Trp-L-Trp), cyclo(L-Leu-L-Ala), cyclo(L-Phe-Gly), cyclo(L-Leu-Gly), cyclo(L-Ser-Gly) and cyclo(L-Glu-Gly) as substrate suggesting that the diketopiperazine ring is essential for the enzymatic reaction. This is Albonoursin synthase (albA) from Streptomyces noursei (Streptomyces albulus).